We begin with the raw amino-acid sequence, 366 residues long: Aminomethyltransferase (366 aa).

The protein belongs to the GcvT family. The glycine cleavage system is composed of four proteins: P, T, L and H.

It catalyses the reaction N(6)-[(R)-S(8)-aminomethyldihydrolipoyl]-L-lysyl-[protein] + (6S)-5,6,7,8-tetrahydrofolate = N(6)-[(R)-dihydrolipoyl]-L-lysyl-[protein] + (6R)-5,10-methylene-5,6,7,8-tetrahydrofolate + NH4(+). Functionally, the glycine cleavage system catalyzes the degradation of glycine. The chain is Aminomethyltransferase from Bordetella petrii (strain ATCC BAA-461 / DSM 12804 / CCUG 43448).